Reading from the N-terminus, the 607-residue chain is Guanine nucleotide-binding protein-like 1 (607 aa).

Residues 1 to 14 (MPRKKPFSVKQKKK) show a composition bias toward basic residues. Residues 1 to 81 (MPRKKPFSVK…GPRGYDPNRY (81 aa)) form a disordered region. A compositionally biased stretch (basic and acidic residues) spans 15-26 (QLQDKRERKRGL). A phosphoserine mark is found at Ser32, Ser33, and Ser34. 2 positions are modified to phosphothreonine: Thr48 and Thr50. A phosphoserine mark is found at Ser51 and Ser68. The CP-type G domain maps to 178-418 (WRQLWRVLEM…LCDCPGLIFP (241 aa)). 225 to 228 (NKVD) serves as a coordination point for GTP. Residue Ser324 is modified to Phosphoserine. Residues 367-374 (GFPNVGKS) and 411-415 (DCPGL) each bind GTP. Residues 547–607 (GPAGDEEEEE…PYALLGEDEC (61 aa)) are disordered. Over residues 550-584 (GDEEEEEEEELSSSCEEEGEEDRDADEEGEGDEDT) the composition is skewed to acidic residues. Ser561, Ser562, and Ser563 each carry phosphoserine.

Belongs to the TRAFAC class YlqF/YawG GTPase family.

In terms of biological role, possible regulatory or functional link with the histocompatibility cluster. The polypeptide is Guanine nucleotide-binding protein-like 1 (GNL1) (Pongo abelii (Sumatran orangutan)).